We begin with the raw amino-acid sequence, 362 residues long: Chorismate synthase (362 aa).

Arg-47 provides a ligand contact to NADP(+). FMN contacts are provided by residues 124–126 (RSS), Gly-286, 301–305 (KPTAT), and Arg-327.

It belongs to the chorismate synthase family. Homotetramer. FMNH2 is required as a cofactor.

The catalysed reaction is 5-O-(1-carboxyvinyl)-3-phosphoshikimate = chorismate + phosphate. Its pathway is metabolic intermediate biosynthesis; chorismate biosynthesis; chorismate from D-erythrose 4-phosphate and phosphoenolpyruvate: step 7/7. Catalyzes the anti-1,4-elimination of the C-3 phosphate and the C-6 proR hydrogen from 5-enolpyruvylshikimate-3-phosphate (EPSP) to yield chorismate, which is the branch point compound that serves as the starting substrate for the three terminal pathways of aromatic amino acid biosynthesis. This reaction introduces a second double bond into the aromatic ring system. The chain is Chorismate synthase from Nostoc punctiforme (strain ATCC 29133 / PCC 73102).